The chain runs to 114 residues: Hydrogenase maturation factor HypA (114 aa).

H2 is a binding site for Ni(2+). Zn(2+)-binding residues include C73, C76, C90, and C93.

Belongs to the HypA/HybF family.

Its function is as follows. Involved in the maturation of [NiFe] hydrogenases. Required for nickel insertion into the metal center of the hydrogenase. The protein is Hydrogenase maturation factor HypA of Chloroflexus aggregans (strain MD-66 / DSM 9485).